Consider the following 76-residue polypeptide: Defensin-like protein 122 (76 aa).

A signal peptide spans 1–25 (MSKTTVIAIFMVVLVLGLVTKETQG). 4 disulfide bridges follow: cysteine 29–cysteine 74, cysteine 39–cysteine 60, cysteine 44–cysteine 68, and cysteine 48–cysteine 70.

This sequence belongs to the DEFL family. In terms of tissue distribution, expressed in flower buds, but not in stems, roots or rosette leaves.

It localises to the secreted. The sequence is that of Defensin-like protein 122 (LCR30) from Arabidopsis thaliana (Mouse-ear cress).